A 365-amino-acid chain; its full sequence is U1 snRNP-associated protein usp109 (365 aa).

3 RRM domains span residues 3 to 79, 86 to 162, and 189 to 259; these read TSLW…VVPE, YMLF…SVKS, and TAVY…WARP.

Component of the U1 snRNP complex.

It is found in the nucleus. The chain is U1 snRNP-associated protein usp109 (usp109) from Schizosaccharomyces pombe (strain 972 / ATCC 24843) (Fission yeast).